The sequence spans 951 residues: Glycine dehydrogenase (decarboxylating) (951 aa).

The residue at position 709 (K709) is an N6-(pyridoxal phosphate)lysine.

Belongs to the GcvP family. As to quaternary structure, the glycine cleavage system is composed of four proteins: P, T, L and H. The cofactor is pyridoxal 5'-phosphate.

The catalysed reaction is N(6)-[(R)-lipoyl]-L-lysyl-[glycine-cleavage complex H protein] + glycine + H(+) = N(6)-[(R)-S(8)-aminomethyldihydrolipoyl]-L-lysyl-[glycine-cleavage complex H protein] + CO2. In terms of biological role, the glycine cleavage system catalyzes the degradation of glycine. The P protein binds the alpha-amino group of glycine through its pyridoxal phosphate cofactor; CO(2) is released and the remaining methylamine moiety is then transferred to the lipoamide cofactor of the H protein. The chain is Glycine dehydrogenase (decarboxylating) from Gluconobacter oxydans (strain 621H) (Gluconobacter suboxydans).